The primary structure comprises 331 residues: Protein Brevis radix-like 1 (331 aa).

Residues 1 to 111 (MFTCINCTKM…HQSGRPDSRF (111 aa)) form a disordered region. Composition is skewed to polar residues over residues 25 to 41 (STTPNTKEAVKSLTTQI) and 48 to 66 (FSGSHKQSKPTPGSSSSNL). Residues 137 to 192 (KEWMAQVEPGVHITFVSLPSGGNDLKRIRFSREVFDKWQAQRWWGENYDRIVELYN) enclose the BRX 1 domain. Disordered stretches follow at residues 201–246 (LQTP…VPHH) and 258–279 (TTSSRDEPPSMSNASEMQGEWV). Basic and acidic residues predominate over residues 221 to 235 (DSARESRDWTQRDNN). In terms of domain architecture, BRX 2 spans 276–331 (GEWVEEDEPGVYITIRQLPDGTRELRRVRFSRERFGEVHAKTWWEQNRDRIQTQYL).

It belongs to the BRX family. Heterodimer with BRXL1. Expressed in roots.

Its subcellular location is the nucleus. In terms of biological role, may act as a regulator of cell proliferation and elongation in the root. This is Protein Brevis radix-like 1 (BRXL1) from Arabidopsis thaliana (Mouse-ear cress).